The chain runs to 273 residues: Non-homologous end joining protein Ku (273 aa).

Residues Ala10 to Lys193 form the Ku domain. The tract at residues Phe111 to Pro273 is sufficient for interaction with LigD.

The protein belongs to the prokaryotic Ku family. Homodimer. Interacts with LigD.

Functionally, with LigD forms a non-homologous end joining (NHEJ) DNA repair enzyme, which repairs dsDNA breaks with reduced fidelity. Binds linear dsDNA with 5'- and 3'- overhangs but not closed circular dsDNA nor ssDNA. Recruits and stimulates the ligase activity of LigD. The polypeptide is Non-homologous end joining protein Ku (mku) (Mycobacterium tuberculosis (strain CDC 1551 / Oshkosh)).